The following is a 573-amino-acid chain: FAD-dependent monooxygenase resA (573 aa).

The signal sequence occupies residues 1-17 (MYDVIVIGAGWCGLVAA). Residue I106 participates in FAD binding. Residue N235 is glycosylated (N-linked (GlcNAc...) asparagine).

This sequence belongs to the FAD-binding monooxygenase family. It depends on FAD as a cofactor.

It participates in antifungal biosynthesis. Functionally, FAD-dependent monooxygenase; part of the gene cluster that mediates the biosynthesis of the tetrahydropyranyl antifungal agent restricticin that acts as an inhibitor of CYP51 and blocks the ergosterol biosynthesis. The highly reducing polyketide synthase resH, the short chain dehydrogenase resG, the cyclase resF, the FAD-dependent monooxygenase resA and the enoylreductase resD are required to generate the first stable intermediate desmethylrestrictinol. ResH with resD biosynthesize the first polyketide chain intermediate that is reduced by resG, followed by epoxidation by resA before 6-endo cyclization via epoxide opening by resF leads to desmethylrestrictinol. The methyltransferase resE then catalyzes the C4 O-methylation of desmethylrestrictinol to produce restrictinol, and the nonribosomal peptide synthetase resC catalyzes the C3 esterification of restrictinol with glycine that leads to restricticin. This Aspergillus sclerotiorum protein is FAD-dependent monooxygenase resA.